We begin with the raw amino-acid sequence, 283 residues long: MLIIETLPLLRQQIRRLRMEGKRVALVPTMGNLHDGHMKLVDEAKARADVVVVSIFVNPMQFDRPEDLARYPRTLQEDCEKLNKRKVDLVFAPSVKEIYPNGTETHTYVDVPGLSTMLEGASRPGHFRGVSTIVSKLFNLVQPDIACFGEKDFQQLALIRKMVADMGFDIEIVGVPIMRAKDGLALSSRNGYLTAEQRKIAPGLYKVLSSIADKLQAGERDLDEIIAIAGQELNEKGFRSDDIQIRDADTLLEISENSKRAVILVAAWLGDARLIDNKMVELA.

Residue 30-37 (MGNLHDGH) coordinates ATP. His-37 (proton donor) is an active-site residue. A (R)-pantoate-binding site is contributed by Gln-61. Position 61 (Gln-61) interacts with beta-alanine. 149–152 (GEKD) contacts ATP. Gln-155 provides a ligand contact to (R)-pantoate. 186 to 189 (LSSR) contacts ATP.

This sequence belongs to the pantothenate synthetase family. In terms of assembly, homodimer.

The protein resides in the cytoplasm. The catalysed reaction is (R)-pantoate + beta-alanine + ATP = (R)-pantothenate + AMP + diphosphate + H(+). The protein operates within cofactor biosynthesis; (R)-pantothenate biosynthesis; (R)-pantothenate from (R)-pantoate and beta-alanine: step 1/1. Functionally, catalyzes the condensation of pantoate with beta-alanine in an ATP-dependent reaction via a pantoyl-adenylate intermediate. The chain is Pantothenate synthetase from Escherichia fergusonii (strain ATCC 35469 / DSM 13698 / CCUG 18766 / IAM 14443 / JCM 21226 / LMG 7866 / NBRC 102419 / NCTC 12128 / CDC 0568-73).